We begin with the raw amino-acid sequence, 246 residues long: Alpha-tubulin N-acetyltransferase (246 aa).

Residues 21–202 (LTLVPDGVSR…NNFVVFHSFF (182 aa)) enclose the N-acetyltransferase domain. Acetyl-CoA is bound by residues 135 to 148 (FYVD…GYGK) and 172 to 181 (SNKLLGFLRK).

Belongs to the acetyltransferase ATAT1 family.

It catalyses the reaction L-lysyl-[alpha-tubulin] + acetyl-CoA = N(6)-acetyl-L-lysyl-[alpha-tubulin] + CoA + H(+). Specifically acetylates 'Lys-40' in alpha-tubulin on the lumenal side of microtubules. Promotes microtubule destabilization and accelerates microtubule dynamics; this activity may be independent of acetylation activity. Acetylates alpha-tubulin with a slow enzymatic rate, due to a catalytic site that is not optimized for acetyl transfer. Enters the microtubule through each end and diffuses quickly throughout the lumen of microtubules. Acetylates only long/old microtubules because of its slow acetylation rate since it does not have time to act on dynamically unstable microtubules before the enzyme is released. This Leishmania major protein is Alpha-tubulin N-acetyltransferase.